The chain runs to 272 residues: tRNA (guanine-N(7)-)-methyltransferase (272 aa).

Residues 1–20 are compositionally biased toward basic and acidic residues; the sequence is MSTDSESKRRAYREEKEGAR. The interval 1–43 is disordered; it reads MSTDSESKRRAYREEKEGARKKSVKLAPEATPESKPDLPRKRY. Residues Gly-89, 112–113, 148–149, and Cys-168 contribute to the S-adenosyl-L-methionine site; these read EI and NA. Residue Asp-171 is part of the active site. 246–248 is a binding site for S-adenosyl-L-methionine; that stretch reads TEE.

The protein belongs to the class I-like SAM-binding methyltransferase superfamily. TrmB family. As to quaternary structure, forms a complex with TRM82.

The protein localises to the nucleus. It catalyses the reaction guanosine(46) in tRNA + S-adenosyl-L-methionine = N(7)-methylguanosine(46) in tRNA + S-adenosyl-L-homocysteine. Its pathway is tRNA modification; N(7)-methylguanine-tRNA biosynthesis. Functionally, catalyzes the formation of N(7)-methylguanine at position 46 (m7G46) in tRNA. This is tRNA (guanine-N(7)-)-methyltransferase from Meyerozyma guilliermondii (strain ATCC 6260 / CBS 566 / DSM 6381 / JCM 1539 / NBRC 10279 / NRRL Y-324) (Yeast).